A 458-amino-acid chain; its full sequence is Protein RICE SALT SENSITIVE 3 (458 aa).

The segment covering 1-17 (MVGSGAAGGGGGGGGGG) has biased composition (gly residues). Disordered regions lie at residues 1-21 (MVGSGAAGGGGGGGGGGDHAR), 220-325 (TSPS…PEGD), 354-374 (GGGADDGSKTAAAAQDAGHGG), and 386-458 (SHSN…TFLE). A compositionally biased stretch (low complexity) spans 220–232 (TSPSPSSFPLKQQ). Residues 245–262 (HAPPQLPPGASPLFPPGP) show a composition bias toward pro residues. Residues 308–317 (QQPMAAPQQH) show a composition bias toward low complexity. Residues 413–436 (SSSTTSTSPSVSASTAPAPPQQQQ) show a composition bias toward low complexity.

Interacts with BHLH094, BHLH089, TIFY11A/JAZ9 and TIFY11C/JAZ11. Forms a ternary complex with TIFY11A/JAZ9 and BHLH094 in the nucleus. As to expression, expressed in root tips. Expressed at high levels in the meristematic zone and at low levels in the elongation zone of the root tip.

It localises to the nucleus. It is found in the cytoplasm. Functionally, involved in the repression of jasmonate (JA)-induced genes. Forms a ternary complex with TIFY11A/JAZ9 and BHLH094 to negatively regulate JA-responsive genes. Involved in transcriptional regulation in the root tip. Plays a regulatory role in root cell elongation. Regulates root cell elongation during salt stress. The chain is Protein RICE SALT SENSITIVE 3 from Oryza sativa subsp. japonica (Rice).